Here is a 268-residue protein sequence, read N- to C-terminus: Cyclohexadienyl dehydratase (268 aa).

A signal peptide spans 1-25; the sequence is MPKSFRHLVQALACLALLASASLQA.

Belongs to the bacterial solute-binding protein 3 family. As to quaternary structure, homodimer.

It is found in the periplasm. The enzyme catalyses prephenate + H(+) = 3-phenylpyruvate + CO2 + H2O. It carries out the reaction L-arogenate + H(+) = L-phenylalanine + CO2 + H2O. The protein operates within amino-acid biosynthesis; L-phenylalanine biosynthesis; L-phenylalanine from L-arogenate: step 1/1. It participates in amino-acid biosynthesis; L-phenylalanine biosynthesis; phenylpyruvate from prephenate: step 1/1. Functionally, forms alternative pathway for phenylalanine biosynthesis. Can catalyze two reactions: prephenate dehydratase and arogenate dehydratase. May have a role in chemotaxis or transport. In Pseudomonas aeruginosa (strain ATCC 15692 / DSM 22644 / CIP 104116 / JCM 14847 / LMG 12228 / 1C / PRS 101 / PAO1), this protein is Cyclohexadienyl dehydratase (pheC).